The following is a 125-amino-acid chain: Large ribosomal subunit protein bL12 (125 aa).

This sequence belongs to the bacterial ribosomal protein bL12 family. As to quaternary structure, homodimer. Part of the ribosomal stalk of the 50S ribosomal subunit. Forms a multimeric L10(L12)X complex, where L10 forms an elongated spine to which 2 to 4 L12 dimers bind in a sequential fashion. Binds GTP-bound translation factors.

Its function is as follows. Forms part of the ribosomal stalk which helps the ribosome interact with GTP-bound translation factors. Is thus essential for accurate translation. This Rickettsia typhi (strain ATCC VR-144 / Wilmington) protein is Large ribosomal subunit protein bL12.